A 99-amino-acid polypeptide reads, in one-letter code: Aspartyl/glutamyl-tRNA(Asn/Gln) amidotransferase subunit C (99 aa).

This sequence belongs to the GatC family. As to quaternary structure, heterotrimer of A, B and C subunits.

It carries out the reaction L-glutamyl-tRNA(Gln) + L-glutamine + ATP + H2O = L-glutaminyl-tRNA(Gln) + L-glutamate + ADP + phosphate + H(+). It catalyses the reaction L-aspartyl-tRNA(Asn) + L-glutamine + ATP + H2O = L-asparaginyl-tRNA(Asn) + L-glutamate + ADP + phosphate + 2 H(+). In terms of biological role, allows the formation of correctly charged Asn-tRNA(Asn) or Gln-tRNA(Gln) through the transamidation of misacylated Asp-tRNA(Asn) or Glu-tRNA(Gln) in organisms which lack either or both of asparaginyl-tRNA or glutaminyl-tRNA synthetases. The reaction takes place in the presence of glutamine and ATP through an activated phospho-Asp-tRNA(Asn) or phospho-Glu-tRNA(Gln). This is Aspartyl/glutamyl-tRNA(Asn/Gln) amidotransferase subunit C from Burkholderia vietnamiensis (strain G4 / LMG 22486) (Burkholderia cepacia (strain R1808)).